A 22-amino-acid polypeptide reads, in one-letter code: ARTGFGVLKPAMQGYPGLVLPR.

The chain is Unknown protein 10 from Pseudotsuga menziesii (Douglas-fir).